The following is a 997-amino-acid chain: Chromosomal passenger complex protein bir1 (997 aa).

BIR repeat units lie at residues 25-99 (RLDT…PWAY) and 120-194 (REQT…VFFT). Zn(2+)-binding residues include C163, C166, H183, and C190. 5 disordered regions span residues 217–329 (EDLT…FSKG), 370–527 (TVSD…ENDE), 682–701 (TRDV…NHEE), 755–782 (SPKL…EKEA), and 817–838 (RTSV…ETKV). Residues 240–252 (TLNFSPSRKNNLN) are compositionally biased toward polar residues. The span at 288 to 299 (PRRKNKSPKKSK) shows a compositional bias: basic residues. A compositionally biased stretch (acidic residues) spans 311-320 (SDEDEDDDDL). Positions 370–392 (TVSDITGHQSVTDESDEQNNCMS) are enriched in polar residues. Low complexity predominate over residues 408–423 (SVVSKSKEISSSVSSV). Over residues 426–451 (EQNHTEKQVAIETPEQQKVEKEDEHL) the composition is skewed to basic and acidic residues. Composition is skewed to polar residues over residues 463–476 (KQPI…SSPD) and 485–512 (RVSS…FSNI). The span at 756–772 (PKLQSKNNQTVEAVNTE) shows a compositional bias: polar residues. Residues 773-782 (TSDKLQEKEA) show a composition bias toward basic and acidic residues. A compositionally biased stretch (polar residues) spans 817-830 (RTSVQNGTRSVSKN).

In terms of assembly, component of the CPC complex at least composed of ark1, bir1 and pic1. Interacts with the mitotic checkpoint complex (MCC) subunit mad3. Post-translationally, phosphorylated by ark1.

It localises to the nucleus. Its subcellular location is the cytoplasm. The protein localises to the cytoskeleton. It is found in the spindle. The protein resides in the chromosome. It localises to the centromere. Component of the chromosomal passenger complex (CPC), a complex that acts as a key regulator of chromosome segregation and cytokinesis. Has a role in chromosome segregation by recruiting condensin and ark1 kinase to appropriate sites as the cell progresses through mitosis. Ark1 activity depends upon bir1 function and phosphorylation. Ark1 with bir1 function is required for full-scale association with kinetochores and formation of a complex with mad3. The polypeptide is Chromosomal passenger complex protein bir1 (bir1) (Schizosaccharomyces pombe (strain 972 / ATCC 24843) (Fission yeast)).